A 183-amino-acid chain; its full sequence is Large ribosomal subunit protein uL5 (183 aa).

This sequence belongs to the universal ribosomal protein uL5 family. In terms of assembly, part of the 50S ribosomal subunit; part of the 5S rRNA/L5/L18/L25 subcomplex. Contacts the 5S rRNA and the P site tRNA. Forms a bridge to the 30S subunit in the 70S ribosome.

Its function is as follows. This is one of the proteins that bind and probably mediate the attachment of the 5S RNA into the large ribosomal subunit, where it forms part of the central protuberance. In the 70S ribosome it contacts protein S13 of the 30S subunit (bridge B1b), connecting the 2 subunits; this bridge is implicated in subunit movement. Contacts the P site tRNA; the 5S rRNA and some of its associated proteins might help stabilize positioning of ribosome-bound tRNAs. This Leptospira biflexa serovar Patoc (strain Patoc 1 / Ames) protein is Large ribosomal subunit protein uL5.